Here is a 1117-residue protein sequence, read N- to C-terminus: DNA polymerase (1117 aa).

The interval 591-621 (ESSPVASFEEDSEQTSDSSLGEVSSQGSSDG) is disordered. Over residues 606–618 (SDSSLGEVSSQGS) the composition is skewed to low complexity.

Belongs to the DNA polymerase type-B family.

Its subcellular location is the host nucleus. The catalysed reaction is DNA(n) + a 2'-deoxyribonucleoside 5'-triphosphate = DNA(n+1) + diphosphate. The sequence is that of DNA polymerase from Cavia porcellus (Guinea pig).